The following is an 801-amino-acid chain: Phenylalanine--tRNA ligase beta subunit (801 aa).

Positions 39–153 constitute a tRNA-binding domain; it reads AEGLSKLVVG…EEAVPGDAIF (115 aa). A B5 domain is found at 406-481; that stretch reads TEPVEVSTSL…RIYGYDKLPT (76 aa). Mg(2+) is bound by residues Asp459, Asp465, Glu468, and Glu469. Positions 708 to 801 constitute an FDX-ACB domain; the sequence is TKFPAMTRDI…LTEQVGAEVR (94 aa).

The protein belongs to the phenylalanyl-tRNA synthetase beta subunit family. Type 1 subfamily. Tetramer of two alpha and two beta subunits. Requires Mg(2+) as cofactor.

Its subcellular location is the cytoplasm. It carries out the reaction tRNA(Phe) + L-phenylalanine + ATP = L-phenylalanyl-tRNA(Phe) + AMP + diphosphate + H(+). This Streptococcus pyogenes serotype M18 (strain MGAS8232) protein is Phenylalanine--tRNA ligase beta subunit.